We begin with the raw amino-acid sequence, 542 residues long: uncharacterized protein (542 aa).

Residues 125 to 138 (ANSNSSSTGRDSTP) are compositionally biased toward low complexity. 4 disordered regions span residues 125–182 (ANSN…NHHN), 194–333 (LPPT…CSSS), 390–428 (SSST…YSSI), and 459–487 (SSSS…PSCN). A compositionally biased stretch (polar residues) spans 202-213 (QKPSFLSNSNQI). 4 stretches are compositionally biased toward low complexity: residues 228-306 (SYTS…NSNN), 314-333 (NKLS…CSSS), 390-423 (SSST…TSTN), and 459-479 (SSSS…GGNS).

This is an uncharacterized protein from Dictyostelium discoideum (Social amoeba).